The following is a 358-amino-acid chain: Alanine racemase (358 aa).

Residue lysine 35 is the Proton acceptor; specific for D-alanine of the active site. Lysine 35 carries the post-translational modification N6-(pyridoxal phosphate)lysine. Substrate is bound at residue arginine 130. The active-site Proton acceptor; specific for L-alanine is the tyrosine 255. Methionine 303 provides a ligand contact to substrate.

Belongs to the alanine racemase family. The cofactor is pyridoxal 5'-phosphate.

It catalyses the reaction L-alanine = D-alanine. It participates in amino-acid biosynthesis; D-alanine biosynthesis; D-alanine from L-alanine: step 1/1. Catalyzes the interconversion of L-alanine and D-alanine. May also act on other amino acids. The polypeptide is Alanine racemase (alr) (Shewanella sp. (strain W3-18-1)).